We begin with the raw amino-acid sequence, 336 residues long: Ketol-acid reductoisomerase (NADP(+)) 1 (336 aa).

Residues Ala2 to Thr181 enclose the KARI N-terminal Rossmann domain. NADP(+) contacts are provided by residues Tyr25–Gln28, Arg48, Ser52, and Asp82–Gln85. The active site involves His107. Position 133 (Gly133) interacts with NADP(+). The 146-residue stretch at Thr182–Val327 folds into the KARI C-terminal knotted domain. Positions 190, 194, 226, and 230 each coordinate Mg(2+). Ser251 lines the substrate pocket.

The protein belongs to the ketol-acid reductoisomerase family. Requires Mg(2+) as cofactor.

It carries out the reaction (2R)-2,3-dihydroxy-3-methylbutanoate + NADP(+) = (2S)-2-acetolactate + NADPH + H(+). It catalyses the reaction (2R,3R)-2,3-dihydroxy-3-methylpentanoate + NADP(+) = (S)-2-ethyl-2-hydroxy-3-oxobutanoate + NADPH + H(+). It participates in amino-acid biosynthesis; L-isoleucine biosynthesis; L-isoleucine from 2-oxobutanoate: step 2/4. It functions in the pathway amino-acid biosynthesis; L-valine biosynthesis; L-valine from pyruvate: step 2/4. In terms of biological role, involved in the biosynthesis of branched-chain amino acids (BCAA). Catalyzes an alkyl-migration followed by a ketol-acid reduction of (S)-2-acetolactate (S2AL) to yield (R)-2,3-dihydroxy-isovalerate. In the isomerase reaction, S2AL is rearranged via a Mg-dependent methyl migration to produce 3-hydroxy-3-methyl-2-ketobutyrate (HMKB). In the reductase reaction, this 2-ketoacid undergoes a metal-dependent reduction by NADPH to yield (R)-2,3-dihydroxy-isovalerate. The chain is Ketol-acid reductoisomerase (NADP(+)) 1 from Bacillus anthracis.